A 413-amino-acid polypeptide reads, in one-letter code: Gamma-glutamyl phosphate reductase (413 aa).

The protein belongs to the gamma-glutamyl phosphate reductase family.

The protein localises to the cytoplasm. It carries out the reaction L-glutamate 5-semialdehyde + phosphate + NADP(+) = L-glutamyl 5-phosphate + NADPH + H(+). It functions in the pathway amino-acid biosynthesis; L-proline biosynthesis; L-glutamate 5-semialdehyde from L-glutamate: step 2/2. Catalyzes the NADPH-dependent reduction of L-glutamate 5-phosphate into L-glutamate 5-semialdehyde and phosphate. The product spontaneously undergoes cyclization to form 1-pyrroline-5-carboxylate. The polypeptide is Gamma-glutamyl phosphate reductase (Rhodococcus jostii (strain RHA1)).